The chain runs to 414 residues: Esterase FrsA (414 aa).

Belongs to the FrsA family.

The catalysed reaction is a carboxylic ester + H2O = an alcohol + a carboxylate + H(+). Catalyzes the hydrolysis of esters. The sequence is that of Esterase FrsA from Escherichia coli O6:K15:H31 (strain 536 / UPEC).